The chain runs to 409 residues: MKDLVERFLSYVSIDTQSNPSAPQCPSTEKQFNLANQLVSELNELELSDVSIDENGYVMGRLPSNVDYDVPAIGFIAHMDTAPDASGENVKPQIINNYQGDIITLGTSGEELTPSQFPDLLNLIGHDLITTDGTTLLGADNKAGIAEILTAIAVLKANPEIPHGDICVGFTPDEEIGRGANLFDVKKFNAKWAYTIDGGPVGELEYENFNATSADVICHGVNVHPGTAKGKMVNSMNIAAQFQMMMPADETPEGTEGYEGFYHLKSMNAGVAKTELGYIVRDFSREGMAERKAFMQQKVNELNAKLEKGRVELVLTDSYFNMREMVEPHPHVIELAKEAMTACDIQPDIKPIRGGTDGARLSFMGLPCPNIFTGGYNFHGIHEFITINGMKQAVDVIVKIAELNASNNK.

Residue histidine 78 coordinates Zn(2+). Residue aspartate 80 is part of the active site. Aspartate 140 is a Zn(2+) binding site. Glutamate 174 acts as the Proton acceptor in catalysis. Glutamate 175, aspartate 197, and histidine 379 together coordinate Zn(2+).

The protein belongs to the peptidase M20B family. Zn(2+) is required as a cofactor.

It localises to the cytoplasm. The catalysed reaction is Release of the N-terminal residue from a tripeptide.. In terms of biological role, cleaves the N-terminal amino acid of tripeptides. The chain is Peptidase T from Aliivibrio fischeri (strain ATCC 700601 / ES114) (Vibrio fischeri).